We begin with the raw amino-acid sequence, 93 residues long: Serine rich endogenous peptide 6 (93 aa).

A signal peptide spans 1-27 (MGTKCYSKLRYVVVLVLLLFVFPCSLS). 2 consecutive short sequence motifs (SCOOP motif) follow at residues 48 to 62 (GIIA…APNI) and 73 to 87 (ISEA…GGGR). The tract at residues 52–93 (GSSPSGQAPNINNNYHGRRLMISEARPSKSKKGGGREPESPG) is disordered. A compositionally biased stretch (polar residues) spans 53-66 (SSPSGQAPNINNNY). 2 consecutive short sequence motifs (sxS motif essential for MIK2 binding) follow at residues 54–56 (SPS) and 79–81 (SKS).

It belongs to the serine rich endogenous peptide (SCOOP) phytocytokine family. As to quaternary structure, interacts with MIK2 (via extracellular leucine-rich repeat domain); this interaction triggers the formation of complex between MIK2 and the BAK1/SERK3 and SERK4 coreceptors, and subsequent BAK1 activation by phosphorylation. Mostly expressed in seedlings shoots, and, to a lower extent, in roots.

It localises to the cell membrane. The protein resides in the secreted. Its subcellular location is the extracellular space. The protein localises to the apoplast. In terms of biological role, brassicaceae-specific phytocytokine (plant endogenous peptide released into the apoplast) perceived by MIK2 in a BAK1/SERK3 and SERK4 coreceptors-dependent manner, that modulates various physiological and antimicrobial processes including growth prevention and reactive oxygen species (ROS) response regulation. Inhibits root growth. This is Serine rich endogenous peptide 6 from Arabidopsis thaliana (Mouse-ear cress).